The chain runs to 439 residues: MNKKFYITTLGCPKNTADSMSMHHSLLEEGFTPATFAEESDFHFINTCTFIQSATEETIQTILSAAQVKKQNHQKLVVVGCFAERYPDNISSEIPEVDLFFGTGRYAQAGKILREKFPDLSPPKREFNDSLLERLKLSSEIENYSKPYAYVKVSDGCNRGCSFCIIPSFRGKFRESPVEDILRDVDRAIRAGAKEICLVSQDTVYYGRNSEVLLDMVRKVAEIDSLEVLRLLYLYPDKKTEKLLRLMGETPKIAPYLESPLQHVSSKILKSMNRVGESSTFKDLFALAREVKPGLEIRTSFIIGYPGEEPGDVDQVLRFIEETRPEKVNLFSYSPQEGTKGAELKQTVSEKEKSRRINLIRDVHLAILEEIHESRIGQTYDAIVDSVENDQAVVRRFQDAPEMDEVVYVDDISLIPGMIGKIRIDSFYEYDMNGTWISK.

One can recognise an MTTase N-terminal domain in the interval 3-118 (KKFYITTLGC…AGKILREKFP (116 aa)). Cysteine 12, cysteine 48, cysteine 81, cysteine 157, cysteine 161, and cysteine 164 together coordinate [4Fe-4S] cluster. Residues 143 to 370 (NYSKPYAYVK…RDVHLAILEE (228 aa)) enclose the Radical SAM core domain. One can recognise a TRAM domain in the interval 373–438 (ESRIGQTYDA…EYDMNGTWIS (66 aa)).

This sequence belongs to the methylthiotransferase family. RimO subfamily. [4Fe-4S] cluster is required as a cofactor.

Its subcellular location is the cytoplasm. It carries out the reaction L-aspartate(89)-[ribosomal protein uS12]-hydrogen + (sulfur carrier)-SH + AH2 + 2 S-adenosyl-L-methionine = 3-methylsulfanyl-L-aspartate(89)-[ribosomal protein uS12]-hydrogen + (sulfur carrier)-H + 5'-deoxyadenosine + L-methionine + A + S-adenosyl-L-homocysteine + 2 H(+). Catalyzes the methylthiolation of an aspartic acid residue of ribosomal protein uS12. This Leptospira borgpetersenii serovar Hardjo-bovis (strain L550) protein is Ribosomal protein uS12 methylthiotransferase RimO.